Here is a 138-residue protein sequence, read N- to C-terminus: Large ribosomal subunit protein uL16 (138 aa).

The segment covering 1–13 has biased composition (basic residues); sequence MLQPSRRKFRKEQ. Residues 1 to 22 are disordered; sequence MLQPSRRKFRKEQKGRNTGIAT.

This sequence belongs to the universal ribosomal protein uL16 family. Part of the 50S ribosomal subunit.

In terms of biological role, binds 23S rRNA and is also seen to make contacts with the A and possibly P site tRNAs. This chain is Large ribosomal subunit protein uL16, found in Methylibium petroleiphilum (strain ATCC BAA-1232 / LMG 22953 / PM1).